Reading from the N-terminus, the 180-residue chain is 3-hydroxyanthranilate 3,4-dioxygenase (180 aa).

O2 is bound at residue Arg-46. Fe cation-binding residues include His-50, Glu-56, and His-94. A substrate-binding site is contributed by Glu-56. Substrate-binding residues include Arg-98 and Glu-109. Positions 124, 127, 161, and 164 each coordinate Fe cation.

It belongs to the 3-HAO family. Homodimer. It depends on Fe(2+) as a cofactor.

The catalysed reaction is 3-hydroxyanthranilate + O2 = (2Z,4Z)-2-amino-3-carboxymuconate 6-semialdehyde. It functions in the pathway cofactor biosynthesis; NAD(+) biosynthesis; quinolinate from L-kynurenine: step 3/3. Catalyzes the oxidative ring opening of 3-hydroxyanthranilate to 2-amino-3-carboxymuconate semialdehyde, which spontaneously cyclizes to quinolinate. The polypeptide is 3-hydroxyanthranilate 3,4-dioxygenase (Jannaschia sp. (strain CCS1)).